A 660-amino-acid polypeptide reads, in one-letter code: Elongation factor 4 (660 aa).

Residues 55–241 form the tr-type G domain; that stretch reads AQIRNFCIIA…EVVRQVPPPQ (187 aa). Residues 67–72 and 188–191 each bind GTP; these read DHGKST and NKID.

Belongs to the TRAFAC class translation factor GTPase superfamily. Classic translation factor GTPase family. LepA subfamily.

The protein localises to the cell membrane. The enzyme catalyses GTP + H2O = GDP + phosphate + H(+). Required for accurate and efficient protein synthesis under certain stress conditions. May act as a fidelity factor of the translation reaction, by catalyzing a one-codon backward translocation of tRNAs on improperly translocated ribosomes. Back-translocation proceeds from a post-translocation (POST) complex to a pre-translocation (PRE) complex, thus giving elongation factor G a second chance to translocate the tRNAs correctly. Binds to ribosomes in a GTP-dependent manner. In Mycolicibacterium paratuberculosis (strain ATCC BAA-968 / K-10) (Mycobacterium paratuberculosis), this protein is Elongation factor 4.